Here is a 192-residue protein sequence, read N- to C-terminus: Orotate phosphoribosyltransferase (192 aa).

Residues Arg101, Lys102, Lys105, His107, and 129-137 (EDVITTGGS) contribute to the 5-phospho-alpha-D-ribose 1-diphosphate site. Positions 133 and 161 each coordinate orotate.

Belongs to the purine/pyrimidine phosphoribosyltransferase family. PyrE subfamily. As to quaternary structure, homodimer. The cofactor is Mg(2+).

It catalyses the reaction orotidine 5'-phosphate + diphosphate = orotate + 5-phospho-alpha-D-ribose 1-diphosphate. It functions in the pathway pyrimidine metabolism; UMP biosynthesis via de novo pathway; UMP from orotate: step 1/2. Its function is as follows. Catalyzes the transfer of a ribosyl phosphate group from 5-phosphoribose 1-diphosphate to orotate, leading to the formation of orotidine monophosphate (OMP). This chain is Orotate phosphoribosyltransferase, found in Sorangium cellulosum (strain So ce56) (Polyangium cellulosum (strain So ce56)).